A 119-amino-acid chain; its full sequence is Phosphoribosyl-AMP cyclohydrolase (119 aa).

Asp-77 contributes to the Mg(2+) binding site. Cys-78 lines the Zn(2+) pocket. Positions 79 and 81 each coordinate Mg(2+). Residues Cys-94 and Cys-101 each contribute to the Zn(2+) site.

It belongs to the PRA-CH family. Homodimer. The cofactor is Mg(2+). Zn(2+) serves as cofactor.

The protein resides in the cytoplasm. It carries out the reaction 1-(5-phospho-beta-D-ribosyl)-5'-AMP + H2O = 1-(5-phospho-beta-D-ribosyl)-5-[(5-phospho-beta-D-ribosylamino)methylideneamino]imidazole-4-carboxamide. It participates in amino-acid biosynthesis; L-histidine biosynthesis; L-histidine from 5-phospho-alpha-D-ribose 1-diphosphate: step 3/9. Functionally, catalyzes the hydrolysis of the adenine ring of phosphoribosyl-AMP. This Cereibacter sphaeroides (strain KD131 / KCTC 12085) (Rhodobacter sphaeroides) protein is Phosphoribosyl-AMP cyclohydrolase.